We begin with the raw amino-acid sequence, 101 residues long: Small ribosomal subunit protein uS14 (101 aa).

This sequence belongs to the universal ribosomal protein uS14 family. As to quaternary structure, part of the 30S ribosomal subunit. Contacts proteins S3 and S10.

Functionally, binds 16S rRNA, required for the assembly of 30S particles and may also be responsible for determining the conformation of the 16S rRNA at the A site. The chain is Small ribosomal subunit protein uS14 from Neorickettsia sennetsu (strain ATCC VR-367 / Miyayama) (Ehrlichia sennetsu).